A 270-amino-acid polypeptide reads, in one-letter code: Neurotrophic factor BDNF precursor form (270 aa).

Positions 1–18 are cleaved as a signal peptide; it reads MTILFVTMVISYFSCMRA. The propeptide occupies 19 to 151; that stretch reads APMREIPGVQ…AANMSMRVRR (133 aa). Residue Asn-144 is glycosylated (N-linked (GlcNAc...) asparagine). 3 disulfide bridges follow: Cys-164–Cys-231, Cys-209–Cys-260, and Cys-219–Cys-262.

This sequence belongs to the NGF-beta family.

The protein localises to the secreted. Its function is as follows. Promotes the survival of neuronal populations that are all located either in the central nervous system or directly connected to it. This is Neurotrophic factor BDNF precursor form (bdnf) from Cyprinus carpio (Common carp).